Consider the following 1196-residue polypeptide: Tubulin-specific chaperone D (1196 aa).

HEAT repeat units follow at residues 363–401 (VIEQLLVGLKDKDTVVRWSAAKGIGRMAGRLPRELADDV), 599–634 (YIAMHVFPALLLMTQSPDLHTRHGAILACAEVTYAL), 752–788 (SSIAKELIPQYLAELQSPEEMARCGFSSALGALPGFL), and 1106–1142 (GDVRKKILLQLFLLLGHPFPVIRKSTASQVYEMVLTY).

The protein belongs to the TBCD family. As to quaternary structure, found in a complex with at least ARL2, PPP2CB, PPP2R1A, PPP2R2A, PPP2R5E and TBCD. Interacts with PPP2CB. Part of a supercomplex made of cofactors A to E. Cofactors A and D function by capturing and stabilizing tubulin in a quasi-native conformation. Cofactor E binds to the cofactor D-tubulin complex; interaction with cofactor C then causes the release of tubulin polypeptides that are committed to the native state. Interacts with ARL2; interaction is enhanced with the GDP-bound form of ARL2. Does not interact with ARL3, ARL4A and ARL4D. Interacts with beta tubulin. Interacts with TBCE.

It is found in the cell junction. The protein resides in the tight junction. It localises to the lateral cell membrane. The protein localises to the cytoplasm. Its subcellular location is the adherens junction. It is found in the cytoskeleton. The protein resides in the microtubule organizing center. It localises to the centrosome. Its function is as follows. Tubulin-folding protein implicated in the first step of the tubulin folding pathway and required for tubulin complex assembly. Involved in the regulation of microtubule polymerization or depolymerization, it modulates microtubule dynamics by capturing GTP-bound beta-tubulin (TUBB). Its ability to interact with beta tubulin is regulated via its interaction with ARL2. Acts as a GTPase-activating protein (GAP) for ARL2. Induces microtubule disruption in absence of ARL2. Increases degradation of beta tubulin, when overexpressed in polarized cells. Promotes epithelial cell detachment, a process antagonized by ARL2. Induces tight adherens and tight junctions disassembly at the lateral cell membrane. Required for correct assembly and maintenance of the mitotic spindle, and proper progression of mitosis. Involved in neuron morphogenesis. The sequence is that of Tubulin-specific chaperone D (Tbcd) from Mus musculus (Mouse).